We begin with the raw amino-acid sequence, 383 residues long: Meiotic recombination protein SPO11-2 (383 aa).

One can recognise a Topo IIA-type catalytic domain in the interval 24–167; sequence LLPHEARARI…LGIMASSRGL (144 aa). Tyrosine 124 acts as the O-(5'-phospho-DNA)-tyrosine intermediate in catalysis. 2 residues coordinate Mg(2+): glutamate 217 and aspartate 270.

It belongs to the TOP6A family. Heterotetramer of 2 SPO11 (SPO11-1 and/or SPO11-2) and 2 MTOPVIB chains. Interacts with MTOPVIB. May form a heterodimer with SPO11-1. Interacts with PRD1. Does not interact with TOP6B. It depends on Mg(2+) as a cofactor. Very low expression in flowers and shoots.

It localises to the nucleus. The catalysed reaction is ATP-dependent breakage, passage and rejoining of double-stranded DNA.. Its function is as follows. Component of a topoisomerase 6 complex specifically required for meiotic recombination. Together with MTOPVIB, mediates DNA cleavage that forms the double-strand breaks (DSB) that initiate meiotic recombination. The complex promotes relaxation of negative and positive supercoiled DNA and DNA decatenation through cleavage and ligation cycles. This is Meiotic recombination protein SPO11-2 (SPO11-2) from Arabidopsis thaliana (Mouse-ear cress).